A 95-amino-acid polypeptide reads, in one-letter code: Putative membrane protein insertion efficiency factor (95 aa).

It belongs to the UPF0161 family.

It is found in the cell membrane. Functionally, could be involved in insertion of integral membrane proteins into the membrane. This chain is Putative membrane protein insertion efficiency factor, found in Lactobacillus delbrueckii subsp. bulgaricus (strain ATCC 11842 / DSM 20081 / BCRC 10696 / JCM 1002 / NBRC 13953 / NCIMB 11778 / NCTC 12712 / WDCM 00102 / Lb 14).